The chain runs to 1117 residues: Protein rliB (1117 aa).

Positions 1–23 are cleaved as a signal peptide; it reads MKNINNKILKIFILFLAICSVKS. N-linked (GlcNAc...) asparagine glycosylation is found at N136, N195, N279, and N318. The G8 domain occupies 266–392; the sequence is STWSNNLVPQ…YHNSWTKLAS (127 aa). PbH1 repeat units lie at residues 522–544 and 545–567; these read VQKS…TIHG and TNNL…YLED. N-linked (GlcNAc...) asparagine glycans are attached at residues N547 and N605. A PbH1 3 repeat occupies 621–642; the sequence is NAYNTIIGNSASGGWAGFSFPN. 6 N-linked (GlcNAc...) asparagine glycosylation sites follow: N728, N845, N1030, N1044, N1091, and N1107.

Belongs to the comF family.

Its subcellular location is the secreted. This is Protein rliB (rliB) from Dictyostelium discoideum (Social amoeba).